The primary structure comprises 786 residues: Zinc finger transcription factor YRM1 (786 aa).

The segment at 1–25 (MSKRGSLQDRASPSEETVKKAQKRR) is disordered. The segment at residues 31–59 (CAFCRKRKLRCDQQKPMCSTCKTRGRSGC) is a DNA-binding region (zn(2)-C6 fungal-type). Residues 721 to 747 (PLAGNSPGLPPEEVRNNSENASHNNET) form a disordered region. Positions 737–747 (NSENASHNNET) are enriched in polar residues.

It is found in the cytoplasm. The protein resides in the nucleus. Its function is as follows. Transcription factor involved in the regulation of multidrug resistance genes. Acts in concert with YRR1. In Saccharomyces cerevisiae (strain ATCC 204508 / S288c) (Baker's yeast), this protein is Zinc finger transcription factor YRM1 (YRM1).